The primary structure comprises 349 residues: Phosphoribosylformylglycinamidine cyclo-ligase (349 aa).

This sequence belongs to the AIR synthase family.

The protein localises to the cytoplasm. It carries out the reaction 2-formamido-N(1)-(5-O-phospho-beta-D-ribosyl)acetamidine + ATP = 5-amino-1-(5-phospho-beta-D-ribosyl)imidazole + ADP + phosphate + H(+). Its pathway is purine metabolism; IMP biosynthesis via de novo pathway; 5-amino-1-(5-phospho-D-ribosyl)imidazole from N(2)-formyl-N(1)-(5-phospho-D-ribosyl)glycinamide: step 2/2. In Methanococcus maripaludis (strain C6 / ATCC BAA-1332), this protein is Phosphoribosylformylglycinamidine cyclo-ligase.